The sequence spans 259 residues: Phosphate import ATP-binding protein PstB (259 aa).

An ABC transporter domain is found at 5-248; sequence IDVSGLHVYY…NKIFTKPEKK (244 aa). Residue 37–44 participates in ATP binding; that stretch reads GSSGCGKS.

It belongs to the ABC transporter superfamily. Phosphate importer (TC 3.A.1.7) family. As to quaternary structure, the complex is composed of two ATP-binding proteins (PstB), two transmembrane proteins (PstC and PstA) and a solute-binding protein (PstS).

It localises to the cell membrane. The catalysed reaction is phosphate(out) + ATP + H2O = ADP + 2 phosphate(in) + H(+). Part of the ABC transporter complex PstSACB involved in phosphate import. Responsible for energy coupling to the transport system. The chain is Phosphate import ATP-binding protein PstB from Thermobifida fusca (strain YX).